Consider the following 853-residue polypeptide: DNA mismatch repair protein MutS (853 aa).

614–621 (GPNMGGKS) contributes to the ATP binding site.

Belongs to the DNA mismatch repair MutS family.

This protein is involved in the repair of mismatches in DNA. It is possible that it carries out the mismatch recognition step. This protein has a weak ATPase activity. The sequence is that of DNA mismatch repair protein MutS from Shigella boydii serotype 18 (strain CDC 3083-94 / BS512).